The following is a 459-amino-acid chain: uncharacterized protein (459 aa).

Residues 6-64 (KNKQEKNIIITIKRLGINGEGIGYYKKKIIFIPGALPNEVVVAKIVDRHPHYLEGELVR) form the TRAM domain. Glutamine 289, tyrosine 318, glutamate 339, and aspartate 387 together coordinate S-adenosyl-L-methionine. Cysteine 414 (nucleophile) is an active-site residue.

The protein belongs to the class I-like SAM-binding methyltransferase superfamily. RNA M5U methyltransferase family.

This is an uncharacterized protein from Lactobacillus johnsonii (strain CNCM I-12250 / La1 / NCC 533).